The sequence spans 156 residues: Ribosome maturation factor RimP (156 aa).

Belongs to the RimP family.

Its subcellular location is the cytoplasm. Required for maturation of 30S ribosomal subunits. This is Ribosome maturation factor RimP from Oceanobacillus iheyensis (strain DSM 14371 / CIP 107618 / JCM 11309 / KCTC 3954 / HTE831).